The chain runs to 505 residues: MSRNYNDELQFLEKISKNCWRIKKGFVPNMQVEGVFYVNDALEKLMFEELRNACRGGGVGGFLPAMKQIGNVAALPGIVHRSIGLPDVHSGYGFAIGNMAAFDMNDSEAVVSPGGVGFDINCGVRLLRTNLDESDVQPVKEQLAQAMFDHIPVGVGSKGVIPMNAKDLEEALEMGVDWSLREGYAWAEDKEHCEEYGRMLQADPNKVSARAKKRGLPQLGTLGAGNHYAEIQVVDEIFNEYAAKKMGIDHKGQVCVMIHSGSRGLGHQVATDALVAMEKAMKRDKIIVNDRQLACARIASPEGQDYLKGMAAAGNYAWVNRSSMTFLTRQAFAKVFNTTPDDLDLHVIYDVSHNIAKVEQHVVDGKERTLLVHRKGSTRAFPPHHPLIAVDYQLTGQPVLIGGTMGTCSYVLTGTEQGMTETFGTTCHGAGRALSRAKSRRNLDFQDVLDKLADMGIAIRVASPKLVMEEAPESYKNVTDVVNTCHDAGISKKAIKLRPIAVIKG.

Residues Asp-119, Cys-122, His-227, and His-259 each coordinate Mn(2+). GMP is bound at residue 226–230; sequence NHYAE. Ser-300 bears the Phosphoserine mark. His-353 is a Mn(2+) binding site. GMP contacts are provided by residues 353–354, 402–405, Ser-409, and 428–431; these read HN, GGTM, and HGAG. The GMP-histidine intermediate role is filled by His-428. Lys-496 is covalently cross-linked (Glycyl lysine isopeptide (Lys-Gly) (interchain with G-Cter in SUMO2)). Lys-504 is a GMP binding site.

The protein belongs to the RtcB family. As to quaternary structure, catalytic component of the tRNA-splicing ligase complex. It depends on Mn(2+) as a cofactor.

It is found in the nucleus. The protein localises to the cytoplasm. It catalyses the reaction a 3'-end 3'-phospho-ribonucleotide-RNA + a 5'-end dephospho-ribonucleoside-RNA + GTP = a ribonucleotidyl-ribonucleotide-RNA + GMP + diphosphate. The enzyme catalyses a 3'-end 2',3'-cyclophospho-ribonucleotide-RNA + a 5'-end dephospho-ribonucleoside-RNA + GTP + H2O = a ribonucleotidyl-ribonucleotide-RNA + GMP + diphosphate + H(+). Its function is as follows. Catalytic subunit of the tRNA-splicing ligase complex that acts by directly joining spliced tRNA halves to mature-sized tRNAs by incorporating the precursor-derived splice junction phosphate into the mature tRNA as a canonical 3',5'-phosphodiester. May act as an RNA ligase with broad substrate specificity, and may function toward other RNAs. This chain is RNA-splicing ligase RtcB homolog, found in Macaca fascicularis (Crab-eating macaque).